A 917-amino-acid chain; its full sequence is ABC transporter A family member 12 (917 aa).

6 helical membrane-spanning segments follow: residues 34–54 (LILVPLFLCLILLAIQQVLDA), 323–343 (IASLLGPLFFTWVVLLLFPVI), 377–397 (FLTISMLYVISLVGFGSAIGL), 409–429 (FVFYFIYSNLQISLAFLVSSI), 435–455 (TVTVIAYILVYGTGLLGSFLF), and 508–528 (GEVFCIMSVEWFLALIVAYYI). An ABC transporter domain is found at 595 to 832 (ILCDNLKKVY…YGGSYVFTMT (238 aa)). Position 633-640 (633-640 (GPNGAGKT)) interacts with ATP.

This sequence belongs to the ABC transporter superfamily. ABCA family. CPR flippase (TC 3.A.1.211) subfamily.

It is found in the membrane. The protein is ABC transporter A family member 12 (ABCA12) of Arabidopsis thaliana (Mouse-ear cress).